A 225-amino-acid polypeptide reads, in one-letter code: ATP-dependent dethiobiotin synthetase BioD (225 aa).

Glu15–Phe20 is a binding site for ATP. Thr19 contributes to the Mg(2+) binding site. Lys40 is a catalytic residue. Residues Asp57, Glu118 to Gly121, Asn178 to Arg179, and Pro207 to Val209 each bind ATP. 2 residues coordinate Mg(2+): Asp57 and Glu118.

Belongs to the dethiobiotin synthetase family. As to quaternary structure, homodimer. Mg(2+) serves as cofactor.

Its subcellular location is the cytoplasm. The catalysed reaction is (7R,8S)-7,8-diammoniononanoate + CO2 + ATP = (4R,5S)-dethiobiotin + ADP + phosphate + 3 H(+). The protein operates within cofactor biosynthesis; biotin biosynthesis; biotin from 7,8-diaminononanoate: step 1/2. Catalyzes a mechanistically unusual reaction, the ATP-dependent insertion of CO2 between the N7 and N8 nitrogen atoms of 7,8-diaminopelargonic acid (DAPA, also called 7,8-diammoniononanoate) to form a ureido ring. This chain is ATP-dependent dethiobiotin synthetase BioD, found in Aromatoleum aromaticum (strain DSM 19018 / LMG 30748 / EbN1) (Azoarcus sp. (strain EbN1)).